Consider the following 290-residue polypeptide: Putative phosphoenolpyruvate synthase regulatory protein (290 aa).

170–177 provides a ligand contact to ADP; that stretch reads GVSRCGKT.

The protein belongs to the pyruvate, phosphate/water dikinase regulatory protein family. PSRP subfamily.

The enzyme catalyses [pyruvate, water dikinase] + ADP = [pyruvate, water dikinase]-phosphate + AMP + H(+). It catalyses the reaction [pyruvate, water dikinase]-phosphate + phosphate + H(+) = [pyruvate, water dikinase] + diphosphate. Bifunctional serine/threonine kinase and phosphorylase involved in the regulation of the phosphoenolpyruvate synthase (PEPS) by catalyzing its phosphorylation/dephosphorylation. In Enterobacter agglomerans (Erwinia herbicola), this protein is Putative phosphoenolpyruvate synthase regulatory protein (ydiA).